A 353-amino-acid polypeptide reads, in one-letter code: Chemerin-like receptor 2 (353 aa).

Topologically, residues M1–S41 are extracellular. N14 carries N-linked (GlcNAc...) asparagine glycosylation. The helical transmembrane segment at L42 to F62 threads the bilayer. The Cytoplasmic segment spans residues M63–T73. The helical transmembrane segment at L74–I94 threads the bilayer. At S95–L112 the chain is on the extracellular side. A disulfide bond links C110 and C187. A helical membrane pass occupies residues N113–L133. The Cytoplasmic portion of the chain corresponds to D134–S154. The helical transmembrane segment at L155–F175 threads the bilayer. Topologically, residues R176–L210 are extracellular. Residues F211–T231 form a helical membrane-spanning segment. Over K232 to L247 the chain is Cytoplasmic. Residues S248–L268 traverse the membrane as a helical segment. Residues S269 to L286 are Extracellular-facing. A helical transmembrane segment spans residues S287–K307. Topologically, residues K308–Q353 are cytoplasmic.

It belongs to the chemokine-like receptor (CMKLR) family.

The protein resides in the cell membrane. In terms of biological role, receptor for chemoattractant adipokine chemerin/RARRES2 suggesting a role for this receptor in the regulation of inflammation and energy homesotasis. Signals mainly via beta-arrestin pathway. Binding of RARRES2 activates weakly G proteins, calcium mobilization and MAPK1/MAPK3 (ERK1/2) phosphorylation too. Acts also as a receptor for TAFA1, mediates its effects on neuronal stem-cell proliferation and differentiation via the activation of ROCK/ERK and ROCK/STAT3 signaling pathway. This is Chemerin-like receptor 2 (Cmklr2) from Rattus norvegicus (Rat).